A 256-amino-acid chain; its full sequence is Adenosine 5'-phosphosulfate reductase (256 aa).

4 residues coordinate [4Fe-4S] cluster: cysteine 120, cysteine 121, cysteine 203, and cysteine 206. Cysteine 231 (nucleophile; cysteine thiosulfonate intermediate) is an active-site residue.

This sequence belongs to the PAPS reductase family. CysH subfamily. Requires [4Fe-4S] cluster as cofactor.

The protein resides in the cytoplasm. It catalyses the reaction [thioredoxin]-disulfide + sulfite + AMP + 2 H(+) = adenosine 5'-phosphosulfate + [thioredoxin]-dithiol. The protein operates within sulfur metabolism; hydrogen sulfide biosynthesis; sulfite from sulfate. Functionally, catalyzes the formation of sulfite from adenosine 5'-phosphosulfate (APS) using thioredoxin as an electron donor. This Allochromatium vinosum (strain ATCC 17899 / DSM 180 / NBRC 103801 / NCIMB 10441 / D) (Chromatium vinosum) protein is Adenosine 5'-phosphosulfate reductase.